We begin with the raw amino-acid sequence, 439 residues long: Cysteine--tRNA ligase (439 aa).

C28 is a Zn(2+) binding site. Residues 30 to 40 (ITVYDLCHIGH) carry the 'HIGH' region motif. Residues C209, H234, and E238 each coordinate Zn(2+). Residues 266-270 (KMSKS) carry the 'KMSKS' region motif. Residue K269 coordinates ATP.

This sequence belongs to the class-I aminoacyl-tRNA synthetase family. As to quaternary structure, monomer. The cofactor is Zn(2+).

It is found in the cytoplasm. It carries out the reaction tRNA(Cys) + L-cysteine + ATP = L-cysteinyl-tRNA(Cys) + AMP + diphosphate. In Shigella boydii serotype 4 (strain Sb227), this protein is Cysteine--tRNA ligase.